Here is a 216-residue protein sequence, read N- to C-terminus: Cytidylate kinase (216 aa).

Residue 7–15 (GPAASGKGT) coordinates ATP.

This sequence belongs to the cytidylate kinase family. Type 1 subfamily.

The protein resides in the cytoplasm. It carries out the reaction CMP + ATP = CDP + ADP. It catalyses the reaction dCMP + ATP = dCDP + ADP. The chain is Cytidylate kinase from Methylocella silvestris (strain DSM 15510 / CIP 108128 / LMG 27833 / NCIMB 13906 / BL2).